Consider the following 767-residue polypeptide: Photosystem I P700 chlorophyll a apoprotein A1 (767 aa).

A disordered region spans residues 1–22; sequence MTISPPESGEKNKKVLEDPVKA. Over residues 8 to 22 the composition is skewed to basic and acidic residues; the sequence is SGEKNKKVLEDPVKA. A run of 8 helical transmembrane segments spans residues 76–99, 162–185, 201–225, 309–327, 368–391, 407–433, 455–477, and 558–576; these read IFSA…FHGA, LMAL…YHYH, LNHH…HIGA, IAHH…GHLY, RHAQ…HHMY, LGLF…IAMV, ALIS…LYIH, and LMIH…LILL. The [4Fe-4S] cluster site is built by Cys-600 and Cys-609. The next 2 membrane-spanning stretches (helical) occupy residues 616–637 and 681–703; these read HVFL…HFSW and ISMY…MFLF. His-692 is a divinylchlorophyll a' binding site. Divinyl chlorophyll a-binding residues include Met-700 and Tyr-708. Phylloquinone is bound at residue Trp-709. Residues 741–761 form a helical membrane-spanning segment; the sequence is AVGVAHFLLGGIATTWAFFHA.

This sequence belongs to the PsaA/PsaB family. The PsaA/B heterodimer binds the P700 divinyl chlorophyll special pair and subsequent electron acceptors. PSI consists of a core antenna complex that captures photons, and an electron transfer chain that converts photonic excitation into a charge separation. The cyanobacterial PSI reaction center is composed of one copy each of PsaA,B,C,D,E,F,I,J,K,L,M and X, and forms trimeric complexes. The cofactor is PSI electron transfer chain: 5 divinyl chlorophyll a, 1 divinyl chlorophyll a', 2 phylloquinones and 3 4Fe-4S clusters. PSI core antenna: 90 divinyl chlorophyll a, 22 carotenoids, 3 phospholipids and 1 galactolipid. P700 is a divinyl chlorophyll a/divinyl chlorophyll a' dimer, A0 is one or more divinyl chlorophyll a, A1 is one or both phylloquinones and FX is a shared 4Fe-4S iron-sulfur center..

It is found in the cellular thylakoid membrane. It carries out the reaction reduced [plastocyanin] + hnu + oxidized [2Fe-2S]-[ferredoxin] = oxidized [plastocyanin] + reduced [2Fe-2S]-[ferredoxin]. Functionally, psaA and PsaB bind P700, the primary electron donor of photosystem I (PSI), as well as the electron acceptors A0, A1 and FX. PSI is a plastocyanin/cytochrome c6-ferredoxin oxidoreductase, converting photonic excitation into a charge separation, which transfers an electron from the donor P700 chlorophyll pair to the spectroscopically characterized acceptors A0, A1, FX, FA and FB in turn. Oxidized P700 is reduced on the lumenal side of the thylakoid membrane by plastocyanin or cytochrome c6. This chain is Photosystem I P700 chlorophyll a apoprotein A1, found in Prochlorococcus marinus (strain MIT 9312).